A 200-amino-acid chain; its full sequence is LHFPL tetraspan subfamily member 6 protein (200 aa).

The signal sequence occupies residues 1-21 (MASSLTCTGVIWALLSFLCAA). The next 3 helical transmembrane spans lie at 84–104 (ICTIVTGLGCGLLLLVALTAL), 123–143 (GIQFLGGLLIGAGCALYPLGW), and 166–186 (IGWAYYCTGAGATAAMLLCTW).

It belongs to the LHFP family. As to expression, pancreas, kidney, skeletal muscle, liver, lung brain, heart, colon, small intestine, uterus, testis, prostate, thymus, spleen and placenta.

The protein resides in the membrane. This chain is LHFPL tetraspan subfamily member 6 protein, found in Homo sapiens (Human).